The sequence spans 375 residues: MTSRYWVVSLPVKDSASSLWNRLQEQISKHSFDTPVYRFNIPNLRVGTLDSLLALGDDLLKSNSFVEGVSQKIRRQIEELERISGVESNALTVDGVPVDSYLTRFVWDEAKYPTMSPLKEVVDNIQSQVAKIEDDLKVRVAEYNNIRGQLNAINRKQSGSLAVRDLSNLVKPEDIVESEHLVTLLAVVPKYSQKDWLACYETLTDYVVPRSSKKLFEDNEYALYTVTLFTRVADNFRIAAREKGFQVRDFEQSVEAQETRKQELAKLVQDQESLRSSLLQWCYTSYGEVFSSWMHFCAVRTFAESIMRYGLPPAFLACVLSPAVKSEKKVRSILERLCDSTNSLYWKSEEDAGAMAGLAGDSETHPYVSFTINLA.

It belongs to the V-ATPase C subunit family. In terms of assembly, V-ATPase is a heteromultimeric enzyme composed of a peripheral catalytic V1 complex (components A to H) attached to an integral membrane V0 proton pore complex (components: a, c, c'', d and e). Phosphorylated on Ser/Thr residues by WNK8.

The protein resides in the vacuole membrane. In terms of biological role, subunit of the peripheral V1 complex of vacuolar ATPase. Subunit C is necessary for the assembly of the catalytic sector of the enzyme and is likely to have a specific function in its catalytic activity. V-ATPase is responsible for acidifying a variety of intracellular compartments in eukaryotic cells. This is V-type proton ATPase subunit C (VHA-C) from Arabidopsis thaliana (Mouse-ear cress).